A 150-amino-acid polypeptide reads, in one-letter code: Protein Smg homolog (150 aa).

It belongs to the Smg family.

The polypeptide is Protein Smg homolog (Leptothrix cholodnii (strain ATCC 51168 / LMG 8142 / SP-6) (Leptothrix discophora (strain SP-6))).